Consider the following 185-residue polypeptide: Ribosome-recycling factor (185 aa).

Belongs to the RRF family.

It is found in the cytoplasm. Functionally, responsible for the release of ribosomes from messenger RNA at the termination of protein biosynthesis. May increase the efficiency of translation by recycling ribosomes from one round of translation to another. In Thermotoga petrophila (strain ATCC BAA-488 / DSM 13995 / JCM 10881 / RKU-1), this protein is Ribosome-recycling factor.